The chain runs to 377 residues: MQCAQYTAGHCHSCQWLNKSYSQQLSDKQQHLQQLLRETSATYWLPPVSSLISGFRNKAKMVVSGSVERPQLGMLHRDGRTVDLCDCPLYPQYFQLVFESIKIFIAKAGLVPYNVARKKGELKYILLTESRASGEMMLRFVLRSETKLAQLEHALPWLQEQLPQLTVISANIQPTHMAILEGEKEVIFTEHKMLKEIFNGIPLYIRPRSFFQTNPEIASALYATAGRWVRELNISSMWDLFCGAGGFGLHCADKETRLTGIEISAEAIACAKNSAKSLGLEQVEFQALDSTHFALDKAQLPELVLVNPPRRGIGKALCEYLSRMAPKFILYSSCNAETMAKDIAALEQYRIEKVQLFDMFPHTEHYETLALLIFDGK.

Residues Cys-3, Cys-11, Cys-14, and Cys-87 each coordinate [4Fe-4S] cluster. Residues Gln-212, Phe-241, Glu-262, and Asn-307 each coordinate S-adenosyl-L-methionine. Cys-334 acts as the Nucleophile in catalysis.

Belongs to the class I-like SAM-binding methyltransferase superfamily. RNA M5U methyltransferase family. RlmC subfamily.

The enzyme catalyses uridine(747) in 23S rRNA + S-adenosyl-L-methionine = 5-methyluridine(747) in 23S rRNA + S-adenosyl-L-homocysteine + H(+). In terms of biological role, catalyzes the formation of 5-methyl-uridine at position 747 (m5U747) in 23S rRNA. The polypeptide is 23S rRNA (uracil(747)-C(5))-methyltransferase RlmC (Xenorhabdus bovienii (strain SS-2004) (Xenorhabdus nematophila subsp. bovienii)).